The primary structure comprises 393 residues: Pyrin and HIN domain-containing protein 1-like (393 aa).

The 87-residue stretch at 1–87 folds into the Pyrin domain; that stretch reads MVNEYKRIVL…ANKLKNEKAK (87 aa). A disordered region spans residues 82–188; the sequence is KNEKAKAKRK…TPTRSSSRIL (107 aa). Positions 87 to 102 are enriched in basic residues; sequence KAKRKGKGKRKTAAKR. Composition is skewed to polar residues over residues 108 to 118 and 126 to 151; these read PSTSQPMSTTN and GRST…AIQI. Low complexity predominate over residues 152–169; the sequence is SPTIASSSGQTSSRSSET. Positions 170-186 are enriched in polar residues; it reads LQSIIQSPETPTRSSSR. The 175-residue stretch at 219 to 393 folds into the HIN-200 domain; that stretch reads NVPKEPSEEN…NPGDKLRLML (175 aa).

This sequence belongs to the HIN-200 family.

It is found in the nucleus. The sequence is that of Pyrin and HIN domain-containing protein 1-like from Mus musculus (Mouse).